A 329-amino-acid polypeptide reads, in one-letter code: Glycerol-3-phosphate dehydrogenase [NAD(P)+] (329 aa).

Residues Ser-13, Trp-14, His-34, and Lys-105 each coordinate NADPH. Residues Lys-105, Gly-134, and Ser-136 each contribute to the sn-glycerol 3-phosphate site. Ala-138 provides a ligand contact to NADPH. Sn-glycerol 3-phosphate is bound by residues Lys-189, Asp-242, Ser-252, Arg-253, and Asn-254. Lys-189 serves as the catalytic Proton acceptor. Arg-253 contacts NADPH. The NADPH site is built by Val-277 and Glu-279.

It belongs to the NAD-dependent glycerol-3-phosphate dehydrogenase family.

The protein resides in the cytoplasm. It catalyses the reaction sn-glycerol 3-phosphate + NAD(+) = dihydroxyacetone phosphate + NADH + H(+). The catalysed reaction is sn-glycerol 3-phosphate + NADP(+) = dihydroxyacetone phosphate + NADPH + H(+). It participates in membrane lipid metabolism; glycerophospholipid metabolism. Its function is as follows. Catalyzes the reduction of the glycolytic intermediate dihydroxyacetone phosphate (DHAP) to sn-glycerol 3-phosphate (G3P), the key precursor for phospholipid synthesis. This is Glycerol-3-phosphate dehydrogenase [NAD(P)+] from Legionella pneumophila (strain Paris).